Here is a 1637-residue protein sequence, read N- to C-terminus: Serine/threonine-protein kinase Genghis Khan (1637 aa).

The Protein kinase domain occupies 100–369; sequence FDILKIIGRG…IQDFMDHPWF (270 aa). ATP contacts are provided by residues 106–114 and Lys129; that span reads IGRGAFGEV. Asp224 functions as the Proton acceptor in the catalytic mechanism. An AGC-kinase C-terminal domain is found at 370 to 440; sequence VGIDWKNIRQ…SLTSSSTLDS (71 aa). Coiled-coil stretches lie at residues 473-587, 643-688, and 839-881; these read VDSV…EDAV, SEKL…LKYT, and DELS…DLQK. The segment at 538–575 is disordered; sequence RNQKQKLSRQVRDKEEELDGAMQKNDSLRNELRKSDKT. The span at 563-575 shows a compositional bias: basic and acidic residues; that stretch reads DSLRNELRKSDKT. At Thr895 the chain carries Phosphothreonine. A disordered region spans residues 952–971; it reads NNKDHSSMKEASVSDLSREE. The Phorbol-ester/DAG-type zinc-finger motif lies at 989 to 1039; the sequence is IHQFLVRTFSSPTKCNHCTSLMVGLTRQGVVCEICGFACHTICCQKVPTTC. In terms of domain architecture, PH spans 1059–1177; it reads GTAYEGYVKV…WVIALGELHR (119 aa). The CNH domain maps to 1203–1489; the sequence is IRNALCSVII…LPLNNLGNVV (287 aa). The CRIB domain maps to 1546–1559; the sequence is ISAPTNFNHISHMG. Residue Ser1584 is modified to Phosphoserine. The segment at 1611–1637 is disordered; that stretch reads DYGNDNIISRTPSPMASSFMDGLSNND. Residues 1616–1626 show a composition bias toward polar residues; the sequence is NIISRTPSPMA.

It belongs to the protein kinase superfamily. AGC Ser/Thr protein kinase family. DMPK subfamily. As to quaternary structure, interacts tightly with GTP-bound but not GDP-bound Cdc42.

It catalyses the reaction L-seryl-[protein] + ATP = O-phospho-L-seryl-[protein] + ADP + H(+). It carries out the reaction L-threonyl-[protein] + ATP = O-phospho-L-threonyl-[protein] + ADP + H(+). Its function is as follows. Acts as a downstream effector for the regulation of actin polymerization by Cdc42. The protein is Serine/threonine-protein kinase Genghis Khan (gek) of Drosophila melanogaster (Fruit fly).